An 83-amino-acid polypeptide reads, in one-letter code: UPF0147 protein TK2131 (83 aa).

It belongs to the UPF0147 family.

In Thermococcus kodakarensis (strain ATCC BAA-918 / JCM 12380 / KOD1) (Pyrococcus kodakaraensis (strain KOD1)), this protein is UPF0147 protein TK2131.